The primary structure comprises 286 residues: Pantothenate synthetase (286 aa).

31–38 lines the ATP pocket; sequence MGALHEGH. His38 (proton donor) is an active-site residue. Gln65 serves as a coordination point for (R)-pantoate. Residue Gln65 coordinates beta-alanine. 153–156 provides a ligand contact to ATP; it reads GEKD. (R)-pantoate is bound at residue Gln159. 190-193 is a binding site for ATP; sequence LSSR.

The protein belongs to the pantothenate synthetase family. In terms of assembly, homodimer.

The protein resides in the cytoplasm. It catalyses the reaction (R)-pantoate + beta-alanine + ATP = (R)-pantothenate + AMP + diphosphate + H(+). The protein operates within cofactor biosynthesis; (R)-pantothenate biosynthesis; (R)-pantothenate from (R)-pantoate and beta-alanine: step 1/1. In terms of biological role, catalyzes the condensation of pantoate with beta-alanine in an ATP-dependent reaction via a pantoyl-adenylate intermediate. This chain is Pantothenate synthetase, found in Corynebacterium diphtheriae (strain ATCC 700971 / NCTC 13129 / Biotype gravis).